The following is a 296-amino-acid chain: Probable endonuclease 4 (296 aa).

The Zn(2+) site is built by histidine 68, histidine 109, glutamate 144, aspartate 178, histidine 181, histidine 213, aspartate 226, histidine 228, and glutamate 258.

Belongs to the AP endonuclease 2 family. It depends on Zn(2+) as a cofactor.

It catalyses the reaction Endonucleolytic cleavage to 5'-phosphooligonucleotide end-products.. Functionally, endonuclease IV plays a role in DNA repair. It cleaves phosphodiester bonds at apurinic or apyrimidinic (AP) sites, generating a 3'-hydroxyl group and a 5'-terminal sugar phosphate. This Staphylococcus aureus (strain NCTC 8325 / PS 47) protein is Probable endonuclease 4.